Here is a 215-residue protein sequence, read N- to C-terminus: Pyridoxine/pyridoxamine 5'-phosphate oxidase (215 aa).

Residues 9-12 and K69 contribute to the substrate site; that span reads RRDY. FMN-binding positions include 64–69, 79–80, K86, and Q108; these read RVLLLK and FT. 3 residues coordinate substrate: Y126, R130, and S134. FMN contacts are provided by residues 143 to 144 and W188; that span reads QS. 194–196 lines the substrate pocket; it reads RLH. R198 is an FMN binding site.

Belongs to the pyridoxamine 5'-phosphate oxidase family. In terms of assembly, homodimer. FMN serves as cofactor.

The catalysed reaction is pyridoxamine 5'-phosphate + O2 + H2O = pyridoxal 5'-phosphate + H2O2 + NH4(+). It carries out the reaction pyridoxine 5'-phosphate + O2 = pyridoxal 5'-phosphate + H2O2. It functions in the pathway cofactor metabolism; pyridoxal 5'-phosphate salvage; pyridoxal 5'-phosphate from pyridoxamine 5'-phosphate: step 1/1. It participates in cofactor metabolism; pyridoxal 5'-phosphate salvage; pyridoxal 5'-phosphate from pyridoxine 5'-phosphate: step 1/1. Its function is as follows. Catalyzes the oxidation of either pyridoxine 5'-phosphate (PNP) or pyridoxamine 5'-phosphate (PMP) into pyridoxal 5'-phosphate (PLP). In Pseudomonas syringae pv. syringae (strain B728a), this protein is Pyridoxine/pyridoxamine 5'-phosphate oxidase.